We begin with the raw amino-acid sequence, 1254 residues long: Zinc finger protein BRUTUS (1254 aa).

The segment at 1-40 (MATPLPDFETARGGGAVASSSTTVLPSSVSSSSSSSRPLP) is disordered. Positions 19–40 (SSSTTVLPSSVSSSSSSSRPLP) are enriched in low complexity. Residues 201-221 (FLCSIPVNMLAVFLPWISSSI) traverse the membrane as a helical segment. Residues 893–913 (GSPDSSSTETSKPSPQKDNDH) are disordered. The segment covering 895 to 906 (PDSSSTETSKPS) has biased composition (polar residues). The CHY-type zinc-finger motif lies at 999-1068 (PEKQIYGCEH…PICTTPSCDG (70 aa)). Cys1006, His1008, Cys1019, Cys1020, Cys1026, Cys1029, His1030, His1036, Cys1048, Cys1051, Cys1061, Cys1066, Cys1076, Cys1079, His1090, Cys1091, Cys1094, Cys1097, His1109, Cys1110, Cys1113, Cys1116, His1124, and Cys1126 together coordinate Zn(2+). The CTCHY-type zinc-finger motif lies at 1071–1134 (MAKHYCSICK…KCLEKSLETN (64 aa)). An RING-type; atypical zinc finger spans residues 1135–1176 (CPICCEFLFTSSEAVRALPCGHYMHSACFQAYTCSHYTCPIC).

As to quaternary structure, interacts with the PYEL proteins bHLH115, bHLH104 and ILR3 in the nucleus. Binds zinc and iron ions. In terms of tissue distribution, expressed in cotyledons of seedlings, young leaves, developing and mature embryos, and other reproductive tissues including floral vasculature, funiculus, septum, and gynoecium valves.

It is found in the membrane. The protein localises to the nucleus. It participates in protein modification; protein ubiquitination. Functionally, essential protein. Negatively regulates the response to iron deficiency and thus contributes to iron homeostasis. Exhibits E3 ubiquitin-protein ligase activity in vitro. Plays a role in root growth, rhizosphere acidification, and iron reductase activity in response to iron deprivation. Facilitates 26S proteasome-mediated degradation of PYEL proteins in the absence of iron. This chain is Zinc finger protein BRUTUS, found in Arabidopsis thaliana (Mouse-ear cress).